A 326-amino-acid chain; its full sequence is Malate dehydrogenase (326 aa).

Position 11 to 17 (11 to 17) interacts with NAD(+); it reads GAAGQIG. Substrate-binding residues include R92 and R98. NAD(+) contacts are provided by residues N105, Q112, and 129–131; that span reads VGN. N131 and R162 together coordinate substrate. H187 acts as the Proton acceptor in catalysis.

Belongs to the LDH/MDH superfamily. MDH type 2 family.

It carries out the reaction (S)-malate + NAD(+) = oxaloacetate + NADH + H(+). Functionally, catalyzes the reversible oxidation of malate to oxaloacetate. This is Malate dehydrogenase from Leptospira interrogans serogroup Icterohaemorrhagiae serovar Lai (strain 56601).